A 467-amino-acid chain; its full sequence is Nuclear distribution protein nudF 1 (467 aa).

The region spanning Gln9–Val41 is the LisH domain. Residues Thr60–Thr87 adopt a coiled-coil conformation. WD repeat units lie at residues Ser113–Lys154, His156–Arg196, Gly200–Thr247, Gly250–Thr289, Gly292–Leu352, Gly354–Arg393, Thr398–Pro428, and Ala429–Ala466. Low complexity predominate over residues Gly417 to Ala437. The interval Gly417–Pro441 is disordered.

The protein belongs to the WD repeat LIS1/nudF family. In terms of assembly, self-associates. Interacts with nudE and dynein.

It is found in the cytoplasm. It localises to the cytoskeleton. The protein resides in the spindle pole. Functionally, positively regulates the activity of the minus-end directed microtubule motor protein dynein. May enhance dynein-mediated microtubule sliding by targeting dynein to the microtubule plus end. Required for nuclear migration during vegetative growth as well as development. Required for retrograde early endosome (EE) transport from the hyphal tip. Required for localization of dynein to the mitotic spindle poles. Recruits additional proteins to the dynein complex at SPBs. In Aspergillus clavatus (strain ATCC 1007 / CBS 513.65 / DSM 816 / NCTC 3887 / NRRL 1 / QM 1276 / 107), this protein is Nuclear distribution protein nudF 1.